The sequence spans 437 residues: GTPase Obg (437 aa).

The Obg domain occupies 2–160 (SMFLDTAKIS…RQLELELKIL (159 aa)). Residues 161–338 (ADVGLVGFPS…LLEATAELLA (178 aa)) form the OBG-type G domain. GTP is bound by residues 167-174 (GFPSVGKS), 192-196 (FTTIV), 214-217 (DLPG), 284-287 (NKMD), and 319-321 (SSL). Mg(2+) contacts are provided by serine 174 and threonine 194. Positions 359-437 (GFAETEKNFE…IGKFEFEFVD (79 aa)) constitute an OCT domain.

This sequence belongs to the TRAFAC class OBG-HflX-like GTPase superfamily. OBG GTPase family. Monomer. Mg(2+) is required as a cofactor.

The protein localises to the cytoplasm. Functionally, an essential GTPase which binds GTP, GDP and possibly (p)ppGpp with moderate affinity, with high nucleotide exchange rates and a fairly low GTP hydrolysis rate. Plays a role in control of the cell cycle, stress response, ribosome biogenesis and in those bacteria that undergo differentiation, in morphogenesis control. The sequence is that of GTPase Obg from Streptococcus pyogenes serotype M49 (strain NZ131).